Here is a 308-residue protein sequence, read N- to C-terminus: UPF0282 protein SSO3251 (308 aa).

Belongs to the UPF0282 family.

The sequence is that of UPF0282 protein SSO3251 from Saccharolobus solfataricus (strain ATCC 35092 / DSM 1617 / JCM 11322 / P2) (Sulfolobus solfataricus).